The sequence spans 358 residues: Mannonate dehydratase (358 aa).

The protein belongs to the mannonate dehydratase family. The cofactor is Fe(2+). Mn(2+) is required as a cofactor.

It carries out the reaction D-mannonate = 2-dehydro-3-deoxy-D-gluconate + H2O. Its pathway is carbohydrate metabolism; pentose and glucuronate interconversion. Catalyzes the dehydration of D-mannonate. This is Mannonate dehydratase from Lactococcus lactis subsp. lactis (strain IL1403) (Streptococcus lactis).